A 603-amino-acid chain; its full sequence is Elongation factor 4 (603 aa).

The tr-type G domain occupies 7-189 (SRIRNFSIIA…SIVHLVPPPQ (183 aa)). Residues 19–24 (DHGKST) and 136–139 (NKID) contribute to the GTP site.

The protein belongs to the TRAFAC class translation factor GTPase superfamily. Classic translation factor GTPase family. LepA subfamily.

The protein resides in the cell inner membrane. It carries out the reaction GTP + H2O = GDP + phosphate + H(+). In terms of biological role, required for accurate and efficient protein synthesis under certain stress conditions. May act as a fidelity factor of the translation reaction, by catalyzing a one-codon backward translocation of tRNAs on improperly translocated ribosomes. Back-translocation proceeds from a post-translocation (POST) complex to a pre-translocation (PRE) complex, thus giving elongation factor G a second chance to translocate the tRNAs correctly. Binds to ribosomes in a GTP-dependent manner. The polypeptide is Elongation factor 4 (Cyanothece sp. (strain PCC 7425 / ATCC 29141)).